Here is a 445-residue protein sequence, read N- to C-terminus: Exodeoxyribonuclease 7 large subunit (445 aa).

It belongs to the XseA family. As to quaternary structure, heterooligomer composed of large and small subunits.

Its subcellular location is the cytoplasm. The enzyme catalyses Exonucleolytic cleavage in either 5'- to 3'- or 3'- to 5'-direction to yield nucleoside 5'-phosphates.. Bidirectionally degrades single-stranded DNA into large acid-insoluble oligonucleotides, which are then degraded further into small acid-soluble oligonucleotides. The polypeptide is Exodeoxyribonuclease 7 large subunit (Geotalea daltonii (strain DSM 22248 / JCM 15807 / FRC-32) (Geobacter daltonii)).